A 396-amino-acid chain; its full sequence is Elongation factor Tu (396 aa).

A tr-type G domain is found at 10 to 205 (KPHVNIGTIG…ACDDSIPDPE (196 aa)). The interval 19-26 (GHVDHGKT) is G1. 19–26 (GHVDHGKT) is a GTP binding site. Threonine 26 provides a ligand contact to Mg(2+). Residues 62 to 66 (GITIN) are G2. The tract at residues 83-86 (DAPG) is G3. GTP-binding positions include 83 to 87 (DAPGH) and 138 to 141 (NKCD). The interval 138-141 (NKCD) is G4. Residues 175-177 (SAL) are G5.

Belongs to the TRAFAC class translation factor GTPase superfamily. Classic translation factor GTPase family. EF-Tu/EF-1A subfamily. In terms of assembly, monomer.

The protein resides in the cytoplasm. The enzyme catalyses GTP + H2O = GDP + phosphate + H(+). GTP hydrolase that promotes the GTP-dependent binding of aminoacyl-tRNA to the A-site of ribosomes during protein biosynthesis. This Corynebacterium diphtheriae (strain ATCC 700971 / NCTC 13129 / Biotype gravis) protein is Elongation factor Tu.